A 946-amino-acid chain; its full sequence is Multiple C2 and transmembrane domain-containing protein 1 (946 aa).

Disordered regions lie at residues 28-193 and 205-229; these read QLGV…QKSS and LEPAPPPAEPARRPAEPQSLQKGEE. The segment covering 31–43 has biased composition (gly residues); the sequence is VGKGKGGGGGRAG. The span at 87–96 shows a compositional bias: polar residues; it reads FSSSQPNLCC. The segment covering 143–163 has biased composition (low complexity); sequence PGGRSPDSAPSSSASSSLSSS. Over residues 169–187 the composition is skewed to basic and acidic residues; sequence RGDRIRDEGTRRGSPEAHL. C2 domains lie at 235–353, 399–516, and 550–671; these read KINP…DVTL, QTQS…KLEL, and HKER…AYVL. D270, D276, D323, D325, D331, D433, D439, D486, D488, D494, D589, D595, D641, D643, and D649 together coordinate Ca(2+). 2 consecutive transmembrane segments (helical) span residues 758-778 and 861-881; these read FVLFLLVVWNFELYMIPLLLL and PFLSWLAIIALCVFTAILYFI.

The protein belongs to the MCTP family. It depends on Ca(2+) as a cofactor. In terms of tissue distribution, expressed in the brain and central nervous system (at protein level). Isoform 1 and isoform 2 are expressed in the brain, kidney, liver, heart, lung, skeletal muscle, testis and spleen. Isoform 2 shows a higher expression in the brain, heart and skeletal muscle.

It is found in the cytoplasmic vesicle. Its subcellular location is the secretory vesicle. The protein localises to the synaptic vesicle membrane. It localises to the recycling endosome. The protein resides in the endoplasmic reticulum membrane. Functionally, calcium sensor which is essential for the stabilization of normal baseline neurotransmitter release and for the induction and long-term maintenance of presynaptic homeostatic plasticity. Overexpression in cultured neurons significantly inhibits neuronal transferrin endocytosis, secretory vesicle retrieval, cell migration, and oxidative stress from glutamate toxicity. The sequence is that of Multiple C2 and transmembrane domain-containing protein 1 from Rattus norvegicus (Rat).